The primary structure comprises 311 residues: tRNA pseudouridine synthase B (311 aa).

D39 acts as the Nucleophile in catalysis. The interval 237–268 is disordered; it reads RELSEQETTEISFGRRIAAGPGAGTPDAATAE. Over residues 254–268 the composition is skewed to low complexity; sequence AAGPGAGTPDAATAE.

It belongs to the pseudouridine synthase TruB family. Type 1 subfamily.

The catalysed reaction is uridine(55) in tRNA = pseudouridine(55) in tRNA. Its function is as follows. Responsible for synthesis of pseudouridine from uracil-55 in the psi GC loop of transfer RNAs. In Paenarthrobacter aurescens (strain TC1), this protein is tRNA pseudouridine synthase B.